A 431-amino-acid polypeptide reads, in one-letter code: MKIAEIKGREILDSRGNPTVEVDVILESGIMGRASVPSGASTGEHEALELRDGDKTRYGGKGVLKAVENINTLIAPALKGMDSMDQRGIDKAMLDLDGTPTKSKLGANAILGVSLAVAKAAANYLDIPLYRYIGGTNTYVMPVPMMNIINGGSHSDAPIAFQEFMIRPVGAKTFREALRMGAEVFHALKEVLKKRGLSTAVGDEGGFAPALDGTEDALNCILAAIEAAGYEPFKHITIGLDCASSEFYHDGIYDYTKFEGPKGEKRSAAEQVAYLEKLSWDYPIDSIEDGMAENDWEGWRMLTERLGNRCQLVGDDLFVTNVKFLEKGISEGCANSILIKVNQIGSLTETLDAIEMAQRNGYTTVTSHRSGETEDATIADIAVATNSGQIKTGSLSRSDRMAKYNQLLRIEEELGNRAVYGYKKIARNFKA.

Glutamine 162 provides a ligand contact to (2R)-2-phosphoglycerate. Glutamate 204 (proton donor) is an active-site residue. Residues aspartate 241, glutamate 288, and aspartate 315 each contribute to the Mg(2+) site. Positions 340, 369, 370, and 391 each coordinate (2R)-2-phosphoglycerate. The active-site Proton acceptor is lysine 340.

Belongs to the enolase family. The cofactor is Mg(2+).

It is found in the cytoplasm. It localises to the secreted. Its subcellular location is the cell surface. The catalysed reaction is (2R)-2-phosphoglycerate = phosphoenolpyruvate + H2O. The protein operates within carbohydrate degradation; glycolysis; pyruvate from D-glyceraldehyde 3-phosphate: step 4/5. Functionally, catalyzes the reversible conversion of 2-phosphoglycerate (2-PG) into phosphoenolpyruvate (PEP). It is essential for the degradation of carbohydrates via glycolysis. The sequence is that of Enolase from Phocaeicola vulgatus (strain ATCC 8482 / DSM 1447 / JCM 5826 / CCUG 4940 / NBRC 14291 / NCTC 11154) (Bacteroides vulgatus).